The chain runs to 514 residues: Cobyric acid synthase (514 aa).

The region spanning 249-448 is the GATase cobBQ-type domain; it reads LIDIAVIKLP…VHGVFDNDEI (200 aa). The active-site Nucleophile is the Cys-330. The active site involves His-440.

The protein belongs to the CobB/CobQ family. CobQ subfamily.

It participates in cofactor biosynthesis; adenosylcobalamin biosynthesis. Its function is as follows. Catalyzes amidations at positions B, D, E, and G on adenosylcobyrinic A,C-diamide. NH(2) groups are provided by glutamine, and one molecule of ATP is hydrogenolyzed for each amidation. This chain is Cobyric acid synthase, found in Ruminiclostridium cellulolyticum (strain ATCC 35319 / DSM 5812 / JCM 6584 / H10) (Clostridium cellulolyticum).